A 396-amino-acid chain; its full sequence is Elongation factor Tu (396 aa).

One can recognise a tr-type G domain in the interval 10–206 (KPHVNIGTIG…AVDAYIPEPE (197 aa)). The segment at 19–26 (GHVDHGKT) is G1. Residue 19–26 (GHVDHGKT) coordinates GTP. Threonine 26 is a Mg(2+) binding site. The tract at residues 60 to 64 (GITIA) is G2. The segment at 81–84 (DCPG) is G3. Residues 81-85 (DCPGH) and 136-139 (NKAD) contribute to the GTP site. The G4 stretch occupies residues 136–139 (NKAD). A G5 region spans residues 174–176 (SAL).

It belongs to the TRAFAC class translation factor GTPase superfamily. Classic translation factor GTPase family. EF-Tu/EF-1A subfamily. Monomer.

It localises to the cytoplasm. The enzyme catalyses GTP + H2O = GDP + phosphate + H(+). GTP hydrolase that promotes the GTP-dependent binding of aminoacyl-tRNA to the A-site of ribosomes during protein biosynthesis. The protein is Elongation factor Tu of Geobacter metallireducens (strain ATCC 53774 / DSM 7210 / GS-15).